The sequence spans 679 residues: DNA ligase (679 aa).

NAD(+) is bound by residues 43-47 (DYVYD), 92-93 (SM), and Glu124. Lys126 (N6-AMP-lysine intermediate) is an active-site residue. Residues Arg147, Glu181, Lys297, and Lys321 each coordinate NAD(+). Zn(2+) is bound by residues Cys415, Cys418, Cys433, and Cys438. The region spanning 599 to 679 (TESAEWAGKR…RFDQAMKEEN (81 aa)) is the BRCT domain.

Belongs to the NAD-dependent DNA ligase family. LigA subfamily. It depends on Mg(2+) as a cofactor. Mn(2+) serves as cofactor.

It carries out the reaction NAD(+) + (deoxyribonucleotide)n-3'-hydroxyl + 5'-phospho-(deoxyribonucleotide)m = (deoxyribonucleotide)n+m + AMP + beta-nicotinamide D-nucleotide.. DNA ligase that catalyzes the formation of phosphodiester linkages between 5'-phosphoryl and 3'-hydroxyl groups in double-stranded DNA using NAD as a coenzyme and as the energy source for the reaction. It is essential for DNA replication and repair of damaged DNA. The polypeptide is DNA ligase (Limosilactobacillus fermentum (strain NBRC 3956 / LMG 18251) (Lactobacillus fermentum)).